The sequence spans 443 residues: Transcriptional adapter 2-alpha (443 aa).

The residue at position 6 (S6) is a Phosphoserine. The segment at 12-69 (SDKPPCRGCSSYLMEPYIKCAECGPPPFFLCLQCFTRGFEYKKHQSDHTYEIMTSDFP) adopts a ZZ-type zinc-finger fold. Zn(2+) is bound by residues C17, C20, C31, C34, C42, C45, H55, and H59. Residues 70 to 122 (VLDPSWTAQEEMALLEAVMDCGFGNWQDVANQMCTKTKEECEKHYMKHFINNP) form the SANT domain. Residues K132 and K138 each participate in a glycyl lysine isopeptide (Lys-Gly) (interchain with G-Cter in SUMO2) cross-link. Residues 347-359 (LSPSVPMTSNSGR) show a composition bias toward polar residues. A disordered region spans residues 347–372 (LSPSVPMTSNSGRRSAPPLNLTGLPG). In terms of domain architecture, SWIRM spans 356–443 (NSGRRSAPPL…LIREGYITKA (88 aa)). Residues 426–435 (KTRKIYDFLI) mediate DNA binding.

As to quaternary structure, interacts with GCN5 and NR3C1. Associated with the P/CAF protein in the PCAF complex. Component of the PCAF complex, at least composed of TADA2L/ADA2, TADA3L/ADA3, TAF5L/PAF65-beta, TAF6L/PAF65-alpha, TAF10/TAFII30, TAF12/TAFII20, TAF9/TAFII31 and TRRAP. Component of the ADA2A-containing complex (ATAC), composed of KAT14, KAT2A, TADA2L, TADA3L, ZZ3, MBIP, WDR5, YEATS2, CCDC101 and DR1. Interacts with CCDC134.

It localises to the nucleus. It is found in the chromosome. In terms of biological role, component of the ATAC complex, a complex with histone acetyltransferase activity on histones H3 and H4. Required for the function of some acidic activation domains, which activate transcription from a distant site. Binds double-stranded DNA. Binds dinucleosomes, probably at the linker region between neighboring nucleosomes. Plays a role in chromatin remodeling. May promote TP53/p53 'Lys-321' acetylation, leading to reduced TP53 stability and transcriptional activity. May also promote XRCC6 acetylation thus facilitating cell apoptosis in response to DNA damage. The polypeptide is Transcriptional adapter 2-alpha (TADA2A) (Bos taurus (Bovine)).